The primary structure comprises 715 residues: Fatty acid oxidation complex subunit alpha (715 aa).

Positions 8–197 (NSQPSAFSLT…NLGLVEEAVP (190 aa)) are enoyl-CoA hydratase. The 3-hydroxyacyl-CoA dehydrogenase stretch occupies residues 313–715 (ATIKKVGVLG…MANEEQSFYS (403 aa)).

It in the N-terminal section; belongs to the enoyl-CoA hydratase/isomerase family. In the central section; belongs to the 3-hydroxyacyl-CoA dehydrogenase family. As to quaternary structure, heterotetramer of two alpha chains (FadJ) and two beta chains (FadI).

The protein localises to the cytoplasm. The enzyme catalyses a (3S)-3-hydroxyacyl-CoA = a (2E)-enoyl-CoA + H2O. It carries out the reaction a 4-saturated-(3S)-3-hydroxyacyl-CoA = a (3E)-enoyl-CoA + H2O. The catalysed reaction is a (3S)-3-hydroxyacyl-CoA + NAD(+) = a 3-oxoacyl-CoA + NADH + H(+). It catalyses the reaction (3S)-3-hydroxybutanoyl-CoA = (3R)-3-hydroxybutanoyl-CoA. Its pathway is lipid metabolism; fatty acid beta-oxidation. Its function is as follows. Catalyzes the formation of a hydroxyacyl-CoA by addition of water on enoyl-CoA. Also exhibits 3-hydroxyacyl-CoA epimerase and 3-hydroxyacyl-CoA dehydrogenase activities. The sequence is that of Fatty acid oxidation complex subunit alpha from Photobacterium profundum (strain SS9).